A 529-amino-acid polypeptide reads, in one-letter code: Bifunctional purine biosynthesis protein PurH (529 aa).

Residues 2–148 (QQLRPIHRAL…KNHKDVAIVV (147 aa)) form the MGS-like domain.

Belongs to the PurH family.

The enzyme catalyses (6R)-10-formyltetrahydrofolate + 5-amino-1-(5-phospho-beta-D-ribosyl)imidazole-4-carboxamide = 5-formamido-1-(5-phospho-D-ribosyl)imidazole-4-carboxamide + (6S)-5,6,7,8-tetrahydrofolate. It catalyses the reaction IMP + H2O = 5-formamido-1-(5-phospho-D-ribosyl)imidazole-4-carboxamide. It participates in purine metabolism; IMP biosynthesis via de novo pathway; 5-formamido-1-(5-phospho-D-ribosyl)imidazole-4-carboxamide from 5-amino-1-(5-phospho-D-ribosyl)imidazole-4-carboxamide (10-formyl THF route): step 1/1. It functions in the pathway purine metabolism; IMP biosynthesis via de novo pathway; IMP from 5-formamido-1-(5-phospho-D-ribosyl)imidazole-4-carboxamide: step 1/1. The polypeptide is Bifunctional purine biosynthesis protein PurH (Photorhabdus laumondii subsp. laumondii (strain DSM 15139 / CIP 105565 / TT01) (Photorhabdus luminescens subsp. laumondii)).